The sequence spans 376 residues: Succinyl-diaminopimelate desuccinylase (376 aa).

His74 contributes to the Zn(2+) binding site. Residue Asp76 is part of the active site. Position 105 (Asp105) interacts with Zn(2+). Residue Glu135 is the Proton acceptor of the active site. Zn(2+)-binding residues include Glu136, Glu164, and His349.

It belongs to the peptidase M20A family. DapE subfamily. As to quaternary structure, homodimer. Requires Zn(2+) as cofactor. Co(2+) serves as cofactor.

The catalysed reaction is N-succinyl-(2S,6S)-2,6-diaminopimelate + H2O = (2S,6S)-2,6-diaminopimelate + succinate. It participates in amino-acid biosynthesis; L-lysine biosynthesis via DAP pathway; LL-2,6-diaminopimelate from (S)-tetrahydrodipicolinate (succinylase route): step 3/3. Functionally, catalyzes the hydrolysis of N-succinyl-L,L-diaminopimelic acid (SDAP), forming succinate and LL-2,6-diaminopimelate (DAP), an intermediate involved in the bacterial biosynthesis of lysine and meso-diaminopimelic acid, an essential component of bacterial cell walls. The sequence is that of Succinyl-diaminopimelate desuccinylase from Zymomonas mobilis subsp. mobilis (strain ATCC 31821 / ZM4 / CP4).